We begin with the raw amino-acid sequence, 318 residues long: Extracellular metalloprotease AO090012001025 (318 aa).

The N-terminal stretch at 1–23 is a signal peptide; the sequence is MSHFPTLHILILVIANLQIQCFA. 3 N-linked (GlcNAc...) asparagine glycosylation sites follow: Asn106, Asn121, and Asn193. Residue His229 coordinates Zn(2+). Residue Glu230 is part of the active site. Residue His233 coordinates Zn(2+). A disulfide bond links Cys268 and Cys295.

It belongs to the peptidase M43B family.

It is found in the secreted. Functionally, secreted metalloproteinase that allows assimilation of proteinaceous substrates. The sequence is that of Extracellular metalloprotease AO090012001025 from Aspergillus oryzae (strain ATCC 42149 / RIB 40) (Yellow koji mold).